The sequence spans 537 residues: MPSDSMTDLPETRANAPEWTVSELSFALRRTVEDAYGHVRVRGEISGYRGPHSSGHAYFSIKDEGARLDAVIWKSAFARLKLRPEEGLEVVAVGKLTTYPGKSGYQIVIESLEFAGAGAIMAMLEERKRRLAAEGLFDAARKQELPFLPKVIGVVTSPTGAVIRDILHRLSDRFPRQVIVWPVRVQGETSAAEVAEAIRGFNALPEGGPIPRPDVLIVARGGGSLEDLLGFSDEAVVRAAAESFIPLVSAVGHETDVTLIDFAADVRAPTPTAAAEMVVPVRADLLAGIDAYGERLSAAPRRLLERRRADFRALARHLPTADALLAVPRQRLDAAGERLPRALRANAAAHRLAFEAVRTRHSASAFRLRLARAQDRVAALGGRLQWGLTGLVSRRSERLSAMTARFGSARAASLRAHVLHLSRCRERLSVLSTRAQRAVRHDLRERTNRLAAMEQLLKALSYRGVLARGFALVRDAQGGAVRAAGAVVPGARLELEFADGRLGVQALGEGAPVEPPQAARPSKGARTKAAQPSLFDD.

The disordered stretch occupies residues 508 to 537; sequence GEGAPVEPPQAARPSKGARTKAAQPSLFDD.

This sequence belongs to the XseA family. In terms of assembly, heterooligomer composed of large and small subunits.

It is found in the cytoplasm. It carries out the reaction Exonucleolytic cleavage in either 5'- to 3'- or 3'- to 5'-direction to yield nucleoside 5'-phosphates.. In terms of biological role, bidirectionally degrades single-stranded DNA into large acid-insoluble oligonucleotides, which are then degraded further into small acid-soluble oligonucleotides. This is Exodeoxyribonuclease 7 large subunit from Azorhizobium caulinodans (strain ATCC 43989 / DSM 5975 / JCM 20966 / LMG 6465 / NBRC 14845 / NCIMB 13405 / ORS 571).